The sequence spans 407 residues: Peptidase T (407 aa).

H82 is a Zn(2+) binding site. Residue D84 is part of the active site. D143 lines the Zn(2+) pocket. E177 acts as the Proton acceptor in catalysis. The Zn(2+) site is built by E178, D200, and H382.

It belongs to the peptidase M20B family. It depends on Zn(2+) as a cofactor.

The protein localises to the cytoplasm. The catalysed reaction is Release of the N-terminal residue from a tripeptide.. Its function is as follows. Cleaves the N-terminal amino acid of tripeptides. This is Peptidase T from Streptococcus pyogenes serotype M12 (strain MGAS2096).